A 315-amino-acid polypeptide reads, in one-letter code: Aspartate carbamoyltransferase catalytic subunit (315 aa).

Residues Arg54 and Thr55 each contribute to the carbamoyl phosphate site. An L-aspartate-binding site is contributed by Lys82. Carbamoyl phosphate-binding residues include Arg104, His134, and Gln137. L-aspartate is bound by residues Arg174 and Arg229. Residues Gly270 and Pro271 each contribute to the carbamoyl phosphate site.

Belongs to the aspartate/ornithine carbamoyltransferase superfamily. ATCase family. As to quaternary structure, heterododecamer (2C3:3R2) of six catalytic PyrB chains organized as two trimers (C3), and six regulatory PyrI chains organized as three dimers (R2).

It carries out the reaction carbamoyl phosphate + L-aspartate = N-carbamoyl-L-aspartate + phosphate + H(+). The protein operates within pyrimidine metabolism; UMP biosynthesis via de novo pathway; (S)-dihydroorotate from bicarbonate: step 2/3. Functionally, catalyzes the condensation of carbamoyl phosphate and aspartate to form carbamoyl aspartate and inorganic phosphate, the committed step in the de novo pyrimidine nucleotide biosynthesis pathway. This Leifsonia xyli subsp. xyli (strain CTCB07) protein is Aspartate carbamoyltransferase catalytic subunit.